A 246-amino-acid chain; its full sequence is Proteasome subunit beta type-4 (246 aa).

Positions 1-23 (MTTFSVPIDNGDSMKIAEEESQR) are excised as a propeptide. Thr-24 functions as the Nucleophile in the catalytic mechanism.

It belongs to the peptidase T1B family. Component of the 20S core complex of the 26S proteasome. The 26S proteasome is composed of a core protease (CP), known as the 20S proteasome, capped at one or both ends by the 19S regulatory particle (RP/PA700). The 20S proteasome core is composed of 28 subunits that are arranged in four stacked rings, resulting in a barrel-shaped structure. The two end rings are each formed by seven alpha subunits, and the two central rings are each formed by seven beta subunits. The catalytic chamber with the active sites is on the inside of the barrel. Ubiquitous low levels, higher expression in siliques and flowers.

It is found in the cytoplasm. It localises to the nucleus. In terms of biological role, non-catalytic component of the proteasome, a multicatalytic proteinase complex which is characterized by its ability to cleave peptides with Arg, Phe, Tyr, Leu, and Glu adjacent to the leaving group at neutral or slightly basic pH. The proteasome has an ATP-dependent proteolytic activity. The chain is Proteasome subunit beta type-4 (PBG1) from Arabidopsis thaliana (Mouse-ear cress).